Reading from the N-terminus, the 96-residue chain is Class I hydrophobin 3 (96 aa).

The first 18 residues, methionine 1–alanine 18, serve as a signal peptide directing secretion. 4 disulfides stabilise this stretch: cysteine 43–cysteine 72, cysteine 51–cysteine 66, cysteine 52–cysteine 57, and cysteine 73–cysteine 92.

Belongs to the fungal hydrophobin family.

It is found in the secreted. The protein resides in the cell wall. Its function is as follows. Aerial growth, conidiation, and dispersal of filamentous fungi in the environment rely upon a capability of their secreting small amphipathic proteins called hydrophobins (HPBs) with low sequence identity. Class I can self-assemble into an outermost layer of rodlet bundles on aerial cell surfaces, conferring cellular hydrophobicity that supports fungal growth, development and dispersal; whereas Class II form highly ordered films at water-air interfaces through intermolecular interactions but contribute nothing to the rodlet structure. Does not seem to be important for the ability to cause seedling disease. This is Class I hydrophobin 3 from Gibberella moniliformis (Maize ear and stalk rot fungus).